A 412-amino-acid chain; its full sequence is Gamma-glutamyl phosphate reductase (412 aa).

This sequence belongs to the gamma-glutamyl phosphate reductase family.

The protein localises to the cytoplasm. It catalyses the reaction L-glutamate 5-semialdehyde + phosphate + NADP(+) = L-glutamyl 5-phosphate + NADPH + H(+). It functions in the pathway amino-acid biosynthesis; L-proline biosynthesis; L-glutamate 5-semialdehyde from L-glutamate: step 2/2. Functionally, catalyzes the NADPH-dependent reduction of L-glutamate 5-phosphate into L-glutamate 5-semialdehyde and phosphate. The product spontaneously undergoes cyclization to form 1-pyrroline-5-carboxylate. The polypeptide is Gamma-glutamyl phosphate reductase (Actinobacillus pleuropneumoniae serotype 5b (strain L20)).